The following is a 455-amino-acid chain: Retinoic acid receptor beta (455 aa).

Positions 1–87 (MTTSSRTCPV…PLPPPRVYKP (87 aa)) are modulating. Positions 45 to 78 (QSHPPTSGCSTPSPASVETQSTSSEELVPSPPSP) are disordered. The segment covering 47 to 66 (HPPTSGCSTPSPASVETQST) has biased composition (polar residues). NR C4-type zinc fingers lie at residues 88-108 (CFVC…CEGC) and 124-148 (CHRD…LQKC). The segment at residues 88–153 (CFVCQDKSSG…RLQKCFEVGM (66 aa)) is a DNA-binding region (nuclear receptor). The interval 154–182 (SKESVRNDRNKKKKEPTKQESTENYEMTA) is hinge. Positions 183 to 417 (ELDDLTEKIR…PLIQEMLENS (235 aa)) constitute an NR LBD domain. The tract at residues 416-455 (NSEGHEPLTPTSNGNTAEHSPSISPSSVDNSSVSQSPMVQ) is disordered. Residues 424–434 (TPTSNGNTAEH) are compositionally biased toward polar residues. The span at 435–455 (SPSISPSSVDNSSVSQSPMVQ) shows a compositional bias: low complexity.

This sequence belongs to the nuclear hormone receptor family. NR1 subfamily. As to quaternary structure, heterodimer; with a RXR molecule. Binds DNA preferentially as a RAR/RXR heterodimer. In terms of tissue distribution, both isoforms expressed in heart, lung, kidney, liver, brain, lung and testis. Isoform Beta-1 is highly expressed in testes and brain. Levels increase during testes maturation. Isoform beta-2 is predominant in heart, kidney and lung.

It is found in the nucleus. In terms of biological role, receptor for retinoic acid. Retinoic acid receptors bind as heterodimers to their target response elements in response to their ligands, all-trans or 9-cis retinoic acid, and regulate gene expression in various biological processes. The RAR/RXR heterodimers bind to the retinoic acid response elements (RARE) composed of tandem 5'-AGGTCA-3' sites known as DR1-DR5. May be required for Sertoli cell differentiation and spermatogenesis. This is Retinoic acid receptor beta (RARB) from Coturnix japonica (Japanese quail).